A 624-amino-acid polypeptide reads, in one-letter code: Galactan 5-O-arabinofuranosyltransferase (624 aa).

13 helical membrane passes run 5-25 (VLGQMVLAVLMASAVAGVAIA), 43-63 (ALTTVGQFGCLAGLFAAGLLW), 73-93 (LGALAFISAFSVVTLAMPLGA), 127-147 (IGLPPFYPAGWFWLGGRIAAA), 159-179 (WSIVSITIAVALALVLWAAMI), 181-201 (FEYALVATAASTAAMLAYAST), 203-223 (PYAAIITVLMPPVFVLAWAGL), 234-254 (AIVGVGIFLGVAALFYTLLLV), 280-300 (LAVIAVISGAIALLTWAPYLL), 326-346 (FPMFSLTLHGALCMLGTVWLV), 355-375 (AGALAVAVVAVYAWSLLSMLT), 391-411 (LTVLLTTAGAFGFIEATLAIA), and 422-442 (VVAAATAVGAIGAVTFSQDIP).

Belongs to the glycosyltransferase 85 family.

Its subcellular location is the cell membrane. The enzyme catalyses Adds an alpha-D-arabinofuranosyl group from trans,octacis-decaprenylphospho-beta-D-arabinofuranose at the 5-O-position of the eighth, tenth and twelfth galactofuranose unit of the galactofuranan chain of [beta-D-galactofuranosyl-(1-&gt;5)-beta-D-galactofuranosyl-(1-&gt;6)]14-beta-D-galactofuranosyl-(1-&gt;5)-beta-D-galactofuranosyl-(1-&gt;4)-alpha-L-rhamnopyranosyl-(1-&gt;3)-N-acetyl-alpha-D-glucosaminyl-diphospho-trans,octacis-decaprenol.. It participates in cell wall biogenesis; cell wall polysaccharide biosynthesis. Functionally, involved in the biosynthesis of the arabinogalactan (AG) region of the mycolylarabinogalactan-peptidoglycan (mAGP) complex, an essential component of the mycobacterial cell wall. Catalyzes the addition of the first key arabinofuranosyl (Araf) residue from the sugar donor decaprenyl-phospho-arabinose (DPA) on the C-5 of a 6-linked galactofuranosyl (Galf) of the galactan domain, thus 'priming' the galactan for further elaboration by other arabinofuranosyltransferases. It is not able to add an Araf residue to a terminal Galf. The sequence is that of Galactan 5-O-arabinofuranosyltransferase from Mycolicibacterium smegmatis (strain ATCC 700084 / mc(2)155) (Mycobacterium smegmatis).